Consider the following 164-residue polypeptide: CASP-like protein 1C2 (164 aa).

The Cytoplasmic portion of the chain corresponds to 1-8; the sequence is MAVELKKV. A helical membrane pass occupies residues 9–29; sequence FSTILRFLALAATVVAVIVMI. Topologically, residues 30 to 53 are extracellular; that stretch reads RSHDSAIVLNLTFSAKYNNTPAFK. N-linked (GlcNAc...) asparagine glycosylation is present at Asn-39. Residues 54–74 form a helical membrane-spanning segment; the sequence is YFVIAEGIASVYTIIVIFLWS. Over 75–80 the chain is Cytoplasmic; sequence KGLLGR. Residues 81–101 form a helical membrane-spanning segment; that stretch reads LIVILDMVTTVLLTSSISAAL. The Extracellular segment spans residues 102–129; that stretch reads AIAQVGKKGNSHAGWLPVCGQVPKFCDQ. Residues 130–150 traverse the membrane as a helical segment; that stretch reads AIIALVAGFVAAIVYFMLLLC. Residues 151-164 lie on the Cytoplasmic side of the membrane; the sequence is SLHAVLTPIFAVKP.

The protein belongs to the Casparian strip membrane proteins (CASP) family. Homodimer and heterodimers.

It is found in the cell membrane. The chain is CASP-like protein 1C2 from Ricinus communis (Castor bean).